Consider the following 482-residue polypeptide: Pancreatic lipase-related protein 2 (482 aa).

The first 30 residues, M1–G30, serve as a signal peptide directing secretion. The cysteines at positions 34 and 40 are disulfide-linked. N-linked (GlcNAc...) asparagine glycosylation occurs at N92. The segment at I106 to L118 is required for galactolipase activity. A disulfide bridge connects residues C122 and C133. S184 serves as the catalytic Nucleophile. D208 functions as the Charge relay system in the catalytic mechanism. Ca(2+)-binding residues include E219, R222, D224, and D227. Residues C269 and C293 are joined by a disulfide bond. The segment at Q270–A292 is required for galactolipase activity. The active-site Charge relay system is H295. Intrachain disulfides connect C317/C328 and C331/C336. N-linked (GlcNAc...) asparagine glycans are attached at residues N366 and N441. A PLAT domain is found at W370 to C482. Residues C466 and C482 are joined by a disulfide bond.

Belongs to the AB hydrolase superfamily. Lipase family. As to expression, expressed in acinar cells of pancreas (at protein level).

It localises to the secreted. Its subcellular location is the zymogen granule membrane. The protein localises to the cell projection. The protein resides in the neuron projection. It carries out the reaction a triacylglycerol + H2O = a diacylglycerol + a fatty acid + H(+). The enzyme catalyses a 1,2-diacyl-3-O-(beta-D-galactosyl)-sn-glycerol + 2 H2O = 3-beta-D-galactosyl-sn-glycerol + 2 a fatty acid + 2 H(+). It catalyses the reaction 1,2,3-tri-(9Z-octadecenoyl)-glycerol + H2O = di-(9Z)-octadecenoylglycerol + (9Z)-octadecenoate + H(+). The catalysed reaction is di-(9Z)-octadecenoylglycerol + H2O = (9Z-octadecenoyl)-glycerol + (9Z)-octadecenoate + H(+). It carries out the reaction (9Z-octadecenoyl)-glycerol + H2O = glycerol + (9Z)-octadecenoate + H(+). The enzyme catalyses 1-(9Z-octadecenoyl)-glycerol + H2O = glycerol + (9Z)-octadecenoate + H(+). It catalyses the reaction 1,2,3-tripropanoylglycerol + H2O = dipropanoylglycerol + propanoate + H(+). The catalysed reaction is 1,2,3-tributanoylglycerol + H2O = dibutanoylglycerol + butanoate + H(+). It carries out the reaction 1,2,3-trioctanoylglycerol + H2O = dioctanoylglycerol + octanoate + H(+). The enzyme catalyses 1,2-didecanoylglycerol + H2O = decanoylglycerol + decanoate + H(+). It catalyses the reaction long chain 1,2-diacyl-3-O-beta-D-galactosyl-sn-glycerol + H2O = long chain acyl-3-O-beta-D-galactosyl-sn-glycerol + a fatty acid + H(+). The catalysed reaction is 1,2-dioctanoyl-3-O-beta-D-galactosyl-sn-glycerol + H2O = octanoyl-3-(beta-D-galactosyl)-sn-glycerol + octanoate + H(+). It carries out the reaction 1,2-didodecanoyl-3-beta-D-galactosyl-sn-glycerol + H2O = dodecanoyl-3-beta-D-galactosyl-sn-glycerol + dodecanoate + H(+). The enzyme catalyses 1-beta-D-galactosyl-2,3-didodecanoyl-sn-glycerol + H2O = 1-beta-D-galactosyl-dodecanoyl-sn-glycerol + dodecanoate + H(+). It catalyses the reaction a 1,2-diacyl-3-O-[alpha-D-galactosyl-(1-&gt;6)-beta-D-galactosyl]-sn-glycerol + H2O = acyl-3-O-[alpha-D-galactosyl-(1-&gt;6)-beta-D-galactosyl]-sn-glycerol + a fatty acid + H(+). The catalysed reaction is long chain 1,2-diacyl-3-O-[alpha-D-galactosyl-(1-&gt;6)-beta-D-galactosyl]-sn-glycerol + H2O = long chain acyl-3-O-[alpha-D-galactosyl-(1-&gt;6)-beta-D-galactosyl]-sn-glycerol + a fatty acid + H(+). It carries out the reaction 1,2-dioctanoyl-3-O-[alpha-D-galactosyl-(1-&gt;6)-beta-D-galactosyl]-sn-glycerol + H2O = octanoyl-3-O-[alpha-D-galactosyl-(1-&gt;6)-beta-D-galactosyl]-sn-glycerol + octanoate + H(+). The enzyme catalyses 1,2-didodecanoyl-3-O-[alpha-D-galactosyl-(1-&gt;6)-beta-D-galactosyl]-sn-glycerol + H2O = dodecanoyl-3-O-[alpha-D-galactosyl-(1-&gt;6)-beta-D-galactosyl]-sn-glycerol + dodecanoate + H(+). It catalyses the reaction a 1,2-diacyl-sn-glycero-3-phosphocholine + H2O = a monoacyl-sn-glycero-3-phosphocholine + a fatty acid + H(+). It functions in the pathway glycerolipid metabolism; triacylglycerol degradation. The protein operates within glycolipid metabolism. CLPS stimulates triacylglycerol lipase activity. Triacylglycerol lipase activity is not inhibited by increasing bile salt concentration. Lipase that primarily hydrolyzes triglycerides and galactosylglycerides. In neonates, may play a major role in pancreatic digestion of dietary fats such as milk fat globules enriched in long-chain triglycerides. Hydrolyzes short-, medium- and long-chain fatty acyls in triglycerides without apparent positional specificity. Can completely deacylate triacylglycerols. When the liver matures and bile salt synthesis increases, likely functions mainly as a galactolipase and monoacylglycerol lipase. Hydrolyzes monogalactosyldiglycerols (MGDG) and digalactosyldiacylglycerols (DGDG) present in a plant-based diet, releasing long-chain polyunsaturated fatty acids. Hydrolyzes medium- and long-chain fatty acyls in galactolipids. May act together with LIPF to hydrolyze partially digested triglycerides. Hydrolyzes long-chain monoglycerides with high efficiency. In cytotoxic T cells, contributes to perforin-dependent cell lysis, but is unlikely to mediate direct cytotoxicity. Also has low phospholipase activity. In neurons, required for the localization of the phospholipid 1-oleoyl-2-palmitoyl-PC (OPPC) to neurite tips through acyl chain remodeling of membrane phospholipids. The resulting OPPC-rich lipid membrane domain recruits the t-SNARE protein STX4 by selectively interacting with the STX4 transmembrane domain and this promotes surface expression of the dopamine transporter SLC6A3/DAT at neurite tips by facilitating fusion of SLC6A3-containing transport vesicles with the plasma membrane. This is Pancreatic lipase-related protein 2 from Mus musculus (Mouse).